The following is a 967-amino-acid chain: Leucine-rich repeat receptor-like protein kinase PXC2 (967 aa).

The first 20 residues, 1-20 (MFNGAVSLLFLFLAVVSARA), serve as a signal peptide directing secretion. At 21–609 (DPTFNDDVLG…QIRKSVLSIS (589 aa)) the chain is on the extracellular side. LRR repeat units follow at residues 91–114 (LQFL…EFPH), 115–139 (LGSL…FFEQ), 141–164 (GSLR…LSYC), 165–189 (STLT…WFLK), 191–212 (LKSL…LGGL), 214–236 (DLRH…IGRC), 237–260 (SSLK…MKSL), 262–284 (SCSS…IGDI), 285–307 (ATLE…SLGN), 308–332 (LEFL…LSNC), and 334–356 (NLIS…MFTG). Residues asparagine 103 and asparagine 127 are each glycosylated (N-linked (GlcNAc...) asparagine). N-linked (GlcNAc...) asparagine glycosylation is present at asparagine 171. Asparagine 219 is a glycosylation site (N-linked (GlcNAc...) asparagine). Asparagine 296, asparagine 315, and asparagine 331 each carry an N-linked (GlcNAc...) asparagine glycan. Asparagine 374 carries N-linked (GlcNAc...) asparagine glycosylation. 7 LRR repeats span residues 384-408 (LQGL…IWIL), 410-432 (SLLQ…IGGL), 433-456 (KVAE…IGGA), 457-480 (VSLK…ISNC), 482-503 (ALNT…SIGS), 504-528 (LSNL…IEKL), and 530-552 (HLLT…GFFN). N-linked (GlcNAc...) asparagine glycans are attached at residues asparagine 415, asparagine 446, asparagine 479, asparagine 487, asparagine 516, asparagine 535, asparagine 540, asparagine 571, and asparagine 587. A helical membrane pass occupies residues 610–630 (ALIAIGAAAVIAIGVVAVTLL). Residues 631 to 967 (NVHARSSVSR…LIQCPSHDLE (337 aa)) are Cytoplasmic-facing. Positions 687–959 (LNKDSELGRG…EEVVKILELI (273 aa)) constitute a Protein kinase domain. Residues 693–701 (LGRGGFGVV) and lysine 715 contribute to the ATP site.

This sequence belongs to the protein kinase superfamily. Ser/Thr protein kinase family. In terms of tissue distribution, expressed in the vascular strands of cotyledons, the shoot apex, hypocotyls, roots, leaves, stems and flowers.

The protein localises to the cell membrane. In terms of biological role, leucine-rich repeat receptor-like protein kinase that may play a role in vascular tissues development. This chain is Leucine-rich repeat receptor-like protein kinase PXC2, found in Arabidopsis thaliana (Mouse-ear cress).